Reading from the N-terminus, the 691-residue chain is MLIGQVSRLSAIPPLALQHTLRPLHSSSVLAAGGKRPKQSPSHSRNSPRQKPDWEKRGSNRGRSEQPRASRFGLKSSGTTSFRSEPPRARRVISDSSSGSSASITPKGQHVPTSSRRLLPFSSSDTIPKPSHRFKLEPATMPPNLTPRSFNRDDGVTEEYINGLPAYPTPPTTLANEEQARPRTFDDFGLEEGLVKSLKGLYGEDGKTTPIETLSFHHFTQPDIASAPIGSQRVLLGAETGSGKTVSYLIPLFHHLKRTDPGPSVTSSFFADSENTLHPRSIILSPTHELTRQSTQFAKILTHNTKLSVHGMSSTVSGGVGEKRGSVDVLLGTVGSLRRMFGMTRSEEEQEKEDYIRGKRIWQDEQEKGMVEGDKVEWVVIDEADVLLGREFYLDTISVLSQVKQANLILCTATLPPFLINLLTTNPFFTKKEPFIHLLSPGLHKLPPKLLTRFIRPSTTGNKHGDVAHQVRLTLAEDAKAAKAEGREGEEPSKIVIFCNSDKQVEQVSGILGTKKIDCLAWTGAGEERLRGRNGSLNDFLQRPHLPGHEPPAPLPSLEPRETKPIFQDKNGTTPNVSQVTRRRVLVTTSLLSRGLDFHPSVSSVFLVQPPRDVLDFVHRAGRAGRAGRPGRVVVFGIDEGGTLGEGAKNNKGGKGQGPLKKDGKTALGDRLKDVLGKREVVGAMGKRVRT.

The N-terminal 31 residues, 1–31 (MLIGQVSRLSAIPPLALQHTLRPLHSSSVLA), are a transit peptide targeting the mitochondrion. Positions 31-148 (AAGGKRPKQS…ATMPPNLTPR (118 aa)) are disordered. A compositionally biased stretch (polar residues) spans 39–49 (QSPSHSRNSPR). The span at 50–68 (QKPDWEKRGSNRGRSEQPR) shows a compositional bias: basic and acidic residues. Residues 94–103 (SDSSSGSSAS) are compositionally biased toward low complexity. The segment covering 111–126 (VPTSSRRLLPFSSSDT) has biased composition (polar residues). Residues 183-213 (RTFDDFGLEEGLVKSLKGLYGEDGKTTPIET) carry the Q motif motif. A Helicase ATP-binding domain is found at 225–433 (ASAPIGSQRV…TTNPFFTKKE (209 aa)). An ATP-binding site is contributed by 238–245 (AETGSGKT). Residues 382–385 (DEAD) carry the DEAD box motif. Positions 474–691 (TLAEDAKAAK…VGAMGKRVRT (218 aa)) constitute a Helicase C-terminal domain. Residues 644–667 (LGEGAKNNKGGKGQGPLKKDGKTA) are disordered.

Belongs to the DEAD box helicase family. MRH4 subfamily.

It is found in the mitochondrion. It catalyses the reaction ATP + H2O = ADP + phosphate + H(+). In terms of biological role, ATP-binding RNA helicase involved in mitochondrial RNA metabolism. Required for maintenance of mitochondrial DNA. This is ATP-dependent RNA helicase MRH4, mitochondrial (MRH4) from Cryptococcus neoformans var. neoformans serotype D (strain JEC21 / ATCC MYA-565) (Filobasidiella neoformans).